We begin with the raw amino-acid sequence, 118 residues long: Large ribosomal subunit protein bL19 (118 aa).

The protein belongs to the bacterial ribosomal protein bL19 family.

Functionally, this protein is located at the 30S-50S ribosomal subunit interface and may play a role in the structure and function of the aminoacyl-tRNA binding site. The polypeptide is Large ribosomal subunit protein bL19 (Helicobacter hepaticus (strain ATCC 51449 / 3B1)).